The chain runs to 698 residues: Voltage-dependent calcium channel beta subunit-associated regulatory protein (698 aa).

Over 1–41 (MQPTATMATAAATTATVALTTSWDNATSRPTAEPDPILDNY) the chain is Extracellular. Residue asparagine 25 is glycosylated (N-linked (GlcNAc...) asparagine). Residues 42 to 62 (VLLVVVMSLFVGGTLVVLSGV) traverse the membrane as a helical; Signal-anchor for type III membrane protein segment. The Cytoplasmic portion of the chain corresponds to 63–698 (LLLCKRCWEV…APTSPDHSPA (636 aa)). 2 disordered regions span residues 90–124 (YLDN…TSST) and 185–275 (ASAA…SSGS). The span at 185-197 (ASAAATPHPATTS) shows a compositional bias: low complexity. Phosphoserine is present on residues serine 290 and serine 295. 4 disordered regions span residues 308-339 (SQRA…EQEG), 360-421 (PPPR…HAQC), 438-536 (ATAS…RRDY), and 554-648 (PHFD…GSGL). Over residues 360–375 (PPPRPFLASPTSPPPT) the composition is skewed to pro residues. Over residues 402-413 (PEHAQQQDPQQE) the composition is skewed to low complexity. Over residues 459–468 (SGSGSGGGGA) the composition is skewed to gly residues. The span at 471 to 482 (AFPPPPESPPAL) shows a compositional bias: pro residues. Over residues 483 to 493 (RPKDGEARRLL) the composition is skewed to basic and acidic residues. Phosphoserine occurs at positions 501, 520, and 524. The span at 562 to 576 (HRTRAHPHTHARKQW) shows a compositional bias: basic residues. A Phosphoserine modification is found at serine 610. Residue threonine 691 is modified to Phosphothreonine. 2 positions are modified to phosphoserine: serine 692 and serine 696.

As to quaternary structure, interacts with voltage-dependent calcium channels CACNB1, CACNB2, CACNB3 and CACNB4 beta subunits; prevents their interaction with the CACNA1C alpha subunit thereby negatively regulating the activity of the corresponding calcium channels. Expressed by neurons in the cortex, cerebellum and hippocampus and by pancreatic beta cells (at protein level).

It is found in the cytoplasmic vesicle. The protein localises to the secretory vesicle. Its subcellular location is the synaptic vesicle membrane. The protein resides in the cell membrane. It localises to the cell projection. It is found in the growth cone. Functionally, negatively regulates voltage-gated calcium channels by preventing the interaction between their alpha and beta subunits. Thereby, negatively regulates calcium channels activity at the plasma membrane and indirectly inhibits calcium-regulated exocytosis. The sequence is that of Voltage-dependent calcium channel beta subunit-associated regulatory protein from Mus musculus (Mouse).